The primary structure comprises 283 residues: Protein FAM78A (283 aa).

This sequence belongs to the FAM78 family.

The polypeptide is Protein FAM78A (FAM78A) (Homo sapiens (Human)).